A 408-amino-acid polypeptide reads, in one-letter code: Argininosuccinate synthase (408 aa).

Residues 10–18 (AYSGGLDTS) and Ala-37 each bind ATP. Tyr-90 and Ser-95 together coordinate L-citrulline. Gly-120 lines the ATP pocket. Residues Thr-122, Asn-126, and Asp-127 each contribute to the L-aspartate site. Asn-126 contributes to the L-citrulline binding site. L-citrulline is bound by residues Arg-130, Ser-182, Ser-191, Glu-267, and Tyr-279.

It belongs to the argininosuccinate synthase family. Type 1 subfamily. Homotetramer.

Its subcellular location is the cytoplasm. It catalyses the reaction L-citrulline + L-aspartate + ATP = 2-(N(omega)-L-arginino)succinate + AMP + diphosphate + H(+). It participates in amino-acid biosynthesis; L-arginine biosynthesis; L-arginine from L-ornithine and carbamoyl phosphate: step 2/3. This chain is Argininosuccinate synthase, found in Paraburkholderia xenovorans (strain LB400).